The sequence spans 563 residues: uncharacterized protein (563 aa).

Residues 19-45 (CLICRRRKVKCDRQQPCSRCKERNEVC) constitute a DNA-binding region (zn(2)-C6 fungal-type). Residues 56–78 (NVGPHPSHSENASDSETTLEVSP) form a disordered region. Polar residues predominate over residues 64–75 (SENASDSETTLE).

The protein localises to the nucleus. This is an uncharacterized protein from Schizosaccharomyces pombe (strain 972 / ATCC 24843) (Fission yeast).